Consider the following 417-residue polypeptide: Serine hydroxymethyltransferase (417 aa).

Residues leucine 121 and 125-127 (GHL) contribute to the (6S)-5,6,7,8-tetrahydrofolate site. At lysine 229 the chain carries N6-(pyridoxal phosphate)lysine. Position 355 to 357 (355 to 357 (SPF)) interacts with (6S)-5,6,7,8-tetrahydrofolate.

This sequence belongs to the SHMT family. Homodimer. Requires pyridoxal 5'-phosphate as cofactor.

It localises to the cytoplasm. The enzyme catalyses (6R)-5,10-methylene-5,6,7,8-tetrahydrofolate + glycine + H2O = (6S)-5,6,7,8-tetrahydrofolate + L-serine. Its pathway is one-carbon metabolism; tetrahydrofolate interconversion. It functions in the pathway amino-acid biosynthesis; glycine biosynthesis; glycine from L-serine: step 1/1. Catalyzes the reversible interconversion of serine and glycine with tetrahydrofolate (THF) serving as the one-carbon carrier. This reaction serves as the major source of one-carbon groups required for the biosynthesis of purines, thymidylate, methionine, and other important biomolecules. Also exhibits THF-independent aldolase activity toward beta-hydroxyamino acids, producing glycine and aldehydes, via a retro-aldol mechanism. The protein is Serine hydroxymethyltransferase of Shewanella denitrificans (strain OS217 / ATCC BAA-1090 / DSM 15013).